The following is a 333-amino-acid chain: Dihydroorotate dehydrogenase (quinone) (333 aa).

FMN contacts are provided by residues 56–60 (AGLDK) and Thr80. Lys60 is a substrate binding site. 105–109 (NRMGF) is a substrate binding site. FMN is bound by residues Asn133 and Asn166. Asn166 serves as a coordination point for substrate. Residue Ser169 is the Nucleophile of the active site. Asn171 is a substrate binding site. 2 residues coordinate FMN: Lys211 and Thr239. 240–241 (NT) is a binding site for substrate. Residues Gly262, Gly291, and 312–313 (YS) contribute to the FMN site.

The protein belongs to the dihydroorotate dehydrogenase family. Type 2 subfamily. As to quaternary structure, monomer. FMN serves as cofactor.

The protein localises to the cell membrane. The enzyme catalyses (S)-dihydroorotate + a quinone = orotate + a quinol. Its pathway is pyrimidine metabolism; UMP biosynthesis via de novo pathway; orotate from (S)-dihydroorotate (quinone route): step 1/1. Catalyzes the conversion of dihydroorotate to orotate with quinone as electron acceptor. This Legionella pneumophila (strain Lens) protein is Dihydroorotate dehydrogenase (quinone).